A 155-amino-acid polypeptide reads, in one-letter code: Small ribosomal subunit protein uS7c (155 aa).

Belongs to the universal ribosomal protein uS7 family. Part of the 30S ribosomal subunit.

The protein resides in the plastid. The protein localises to the chloroplast. One of the primary rRNA binding proteins, it binds directly to 16S rRNA where it nucleates assembly of the head domain of the 30S subunit. This Staurastrum punctulatum (Green alga) protein is Small ribosomal subunit protein uS7c (rps7).